The chain runs to 189 residues: UPF0398 protein lhv_1265 (189 aa).

This sequence belongs to the UPF0398 family.

In Lactobacillus helveticus (strain DPC 4571), this protein is UPF0398 protein lhv_1265.